The sequence spans 114 residues: Putative membrane protein insertion efficiency factor (114 aa).

It belongs to the UPF0161 family.

The protein localises to the cell inner membrane. Its function is as follows. Could be involved in insertion of integral membrane proteins into the membrane. The protein is Putative membrane protein insertion efficiency factor of Nitrobacter hamburgensis (strain DSM 10229 / NCIMB 13809 / X14).